Here is a 103-residue protein sequence, read N- to C-terminus: Large ribosomal subunit protein uL24 (103 aa).

Belongs to the universal ribosomal protein uL24 family. In terms of assembly, part of the 50S ribosomal subunit.

In terms of biological role, one of two assembly initiator proteins, it binds directly to the 5'-end of the 23S rRNA, where it nucleates assembly of the 50S subunit. One of the proteins that surrounds the polypeptide exit tunnel on the outside of the subunit. The chain is Large ribosomal subunit protein uL24 from Christiangramia forsetii (strain DSM 17595 / CGMCC 1.15422 / KT0803) (Gramella forsetii).